Consider the following 513-residue polypeptide: Mesoderm induction early response protein 1 (513 aa).

A compositionally biased stretch (low complexity) spans 1–16 (MAEPSVESSSPGGSAT). Residues 1 to 174 (MAEPSVESSS…EEESEEDEDY (174 aa)) are disordered. Composition is skewed to basic and acidic residues over residues 17 to 36 (SDDH…FDDE) and 46 to 63 (EGER…RESD). Acidic residues predominate over residues 82 to 107 (QEDDDDEDEEEEEEEGEDDDDVDNDD). Residues 131-146 (QSSNDDPAPSVASQDP) show a composition bias toward polar residues. Residues 157–261 (YFDTNSEIEE…IKDNEQALYE (105 aa)) are interaction with HDAC1. Residues 162–174 (SEIEEESEEDEDY) show a composition bias toward acidic residues. The ELM2 domain maps to 182 to 280 (KEIMVGSMFQ…ESLRRLRFNV (99 aa)). Residues 285-337 (EELSVWTEEECRNFEQGLKVYGKDFHVIQANKVRTRSVGECVAFYYMWKKSER) form the SANT domain. The segment at 368–513 (ESESAASSRA…KLEELETLDD (146 aa)) is disordered. Basic and acidic residues-rich tracts occupy residues 416–425 (PSKDEAKPEG) and 463–476 (SRSE…NERP). The segment covering 483 to 500 (NSNGKESPGSSEFFQEAN) has biased composition (polar residues).

The protein localises to the nucleus. Its function is as follows. Transcriptional repressor regulating the expression of a number of genes. Probably functions through recruitment of histone deacetylases involved in chromatin silencing. The sequence is that of Mesoderm induction early response protein 1 (MIER1) from Gallus gallus (Chicken).